The primary structure comprises 332 residues: tRNA-dihydrouridine(20/20a) synthase (332 aa).

FMN contacts are provided by residues 19 to 21 and Gln-71; that span reads PML. Catalysis depends on Cys-101, which acts as the Proton donor. FMN-binding positions include Lys-140, His-173, 213–215, and 235–236; these read NGG and GR.

This sequence belongs to the Dus family. DusA subfamily. It depends on FMN as a cofactor.

It carries out the reaction 5,6-dihydrouridine(20) in tRNA + NADP(+) = uridine(20) in tRNA + NADPH + H(+). The catalysed reaction is 5,6-dihydrouridine(20) in tRNA + NAD(+) = uridine(20) in tRNA + NADH + H(+). It catalyses the reaction 5,6-dihydrouridine(20a) in tRNA + NADP(+) = uridine(20a) in tRNA + NADPH + H(+). The enzyme catalyses 5,6-dihydrouridine(20a) in tRNA + NAD(+) = uridine(20a) in tRNA + NADH + H(+). Functionally, catalyzes the synthesis of 5,6-dihydrouridine (D), a modified base found in the D-loop of most tRNAs, via the reduction of the C5-C6 double bond in target uridines. Specifically modifies U20 and U20a in tRNAs. This is tRNA-dihydrouridine(20/20a) synthase from Salmonella typhi.